The primary structure comprises 604 residues: Glucose oxidase (604 aa).

An N-terminal signal peptide occupies residues 1-18 (MKSTIITSILFSVATVQA). Residues leucine 52, threonine 53, and glutamate 73 each contribute to the FAD site. A glycan (N-linked (GlcNAc...) asparagine) is linked at asparagine 111. Positions 125, 129, 130, and 132 each coordinate FAD. Cysteine 186 and cysteine 228 form a disulfide bridge. Asparagine 213 carries N-linked (GlcNAc...) asparagine glycosylation. Valine 272 contacts FAD. 3 N-linked (GlcNAc...) asparagine glycosylation sites follow: asparagine 278, asparagine 409, and asparagine 531. Histidine 537 serves as the catalytic Proton acceptor. Lysine 558 and valine 559 together coordinate O2. Glycine 570 and methionine 582 together coordinate FAD.

This sequence belongs to the GMC oxidoreductase family. As to quaternary structure, homodimer. The cofactor is FAD.

It is found in the secreted. The protein localises to the cell wall. The protein resides in the cytoplasm. Its subcellular location is the extracellular space. It localises to the extracellular matrix. The catalysed reaction is beta-D-glucose + O2 = D-glucono-1,5-lactone + H2O2. In terms of biological role, glucose oxidase catalyzes the oxidation of beta-D-glucose to D-glucono-delta-lactone and hydrogen peroxide in the presence of molecular oxygen. The enzyme also catalyzes the reaction with D-xylose but at a much lower rate. Shows any activities against D-fructose, D-galactose and D-arabinose. The enzyme is cytotoxic for a series of bacteria, yeasts and filamentous fungi and acts primarily via the liberation of H(2)O(2), which is a harmful oxidative stress-generating agent. This is Glucose oxidase from Penicillium chrysogenum (Penicillium notatum).